The chain runs to 180 residues: MASSVMSSAAVATRGNGAQASMVAPFTGLKSTASFPVSRKQNLDITSIASNGGRVRCMQVWPPINMKKYETLSYLPDLSDEQLLKEVEYLLKNGWVPCLEFETEHGFVYRENNKSPGYYDGRYWTMWKLPMFGCTDATQVLAEVEEAKKAYPQAWIRIIGFDNVRQVQCISFIAYKPEGY.

The N-terminal 56 residues, 1–56 (MASSVMSSAAVATRGNGAQASMVAPFTGLKSTASFPVSRKQNLDITSIASNGGRVR), are a transit peptide targeting the chloroplast.

Belongs to the RuBisCO small chain family. Heterohexadecamer of 8 large and 8 small subunits.

The protein resides in the plastid. The protein localises to the chloroplast. Functionally, ruBisCO catalyzes two reactions: the carboxylation of D-ribulose 1,5-bisphosphate, the primary event in carbon dioxide fixation, as well as the oxidative fragmentation of the pentose substrate. Both reactions occur simultaneously and in competition at the same active site. Although the small subunit is not catalytic it is essential for maximal activity. This chain is Ribulose bisphosphate carboxylase small subunit, chloroplastic 5, found in Solanum tuberosum (Potato).